Here is a 1934-residue protein sequence, read N- to C-terminus: Pyruvate dehydrogenase [NADP(+)] (1934 aa).

2 4Fe-4S ferredoxin-type domains span residues 710–739 and 767–796; these read SIPI…PFLL and YRIQ…MEGL. [4Fe-4S] cluster is bound by residues C719, C722, C725, C729, C776, C779, C782, and C786. The region spanning 1288 to 1438 is the Flavodoxin-like domain; sequence MHVLYGTETG…ELIEWLPDYL (151 aa). One can recognise an FAD-binding FR-type domain in the interval 1501–1759; that stretch reads PNSVLLPVIE…NIKASAFNLP (259 aa). FAD is bound by residues 1542 to 1553 and 1685 to 1695; these read YCLGDSLALYGQ and IKSRSYSIASC.

This sequence in the N-terminal section; belongs to the pyruvate:ferredoxin/flavodoxin oxidoreductase family. Homodimer. Requires FAD as cofactor. FMN is required as a cofactor. Thiamine diphosphate serves as cofactor.

It catalyses the reaction pyruvate + NADP(+) + CoA = acetyl-CoA + CO2 + NADPH. May have an important role in respiratory metabolism. Cryptosporidium have a relic mitochondrion with no function in energy metabolism so it is not known if PFOR has a function. This is Pyruvate dehydrogenase [NADP(+)] (PFOR) from Cryptosporidium parvum.